A 548-amino-acid polypeptide reads, in one-letter code: Glucose-6-phosphate isomerase (548 aa).

E353 acts as the Proton donor in catalysis. Catalysis depends on residues H384 and K512.

The protein belongs to the GPI family.

It is found in the cytoplasm. It carries out the reaction alpha-D-glucose 6-phosphate = beta-D-fructose 6-phosphate. Its pathway is carbohydrate biosynthesis; gluconeogenesis. It functions in the pathway carbohydrate degradation; glycolysis; D-glyceraldehyde 3-phosphate and glycerone phosphate from D-glucose: step 2/4. Functionally, catalyzes the reversible isomerization of glucose-6-phosphate to fructose-6-phosphate. The polypeptide is Glucose-6-phosphate isomerase (Pseudoalteromonas translucida (strain TAC 125)).